Reading from the N-terminus, the 171-residue chain is NADH-quinone oxidoreductase subunit I 1 (171 aa).

2 consecutive 4Fe-4S ferredoxin-type domains span residues 39–71 (IVLTRDPDGQERCVACNLCAVVCPVGCIDLTKA) and 81–110 (EHFRINFARCIFCGFCEEACPTSAIQLTPD). Residues C51, C54, C57, C61, C90, C93, C96, and C100 each contribute to the [4Fe-4S] cluster site.

This sequence belongs to the complex I 23 kDa subunit family. As to quaternary structure, NDH-1 is composed of 14 different subunits. Subunits NuoA, H, J, K, L, M, N constitute the membrane sector of the complex. [4Fe-4S] cluster serves as cofactor.

The protein resides in the cell inner membrane. It carries out the reaction a quinone + NADH + 5 H(+)(in) = a quinol + NAD(+) + 4 H(+)(out). In terms of biological role, NDH-1 shuttles electrons from NADH, via FMN and iron-sulfur (Fe-S) centers, to quinones in the respiratory chain. The immediate electron acceptor for the enzyme in this species is believed to be ubiquinone. Couples the redox reaction to proton translocation (for every two electrons transferred, four hydrogen ions are translocated across the cytoplasmic membrane), and thus conserves the redox energy in a proton gradient. The polypeptide is NADH-quinone oxidoreductase subunit I 1 (Rhodopseudomonas palustris (strain BisB5)).